The sequence spans 138 residues: Molluscan insulin-related peptide 5 (138 aa).

An N-terminal signal peptide occupies residues 1-31 (MAGVRLVFTKAFMVTVLLTLLLNIGVKPAEG). A Pyrrolidone carboxylic acid modification is found at glutamine 32. Disulfide bonds link cysteine 48–cysteine 124, cysteine 60–cysteine 137, and cysteine 123–cysteine 128. The propeptide at 72 to 84 (DAETGWLLPETMV) is C-beta peptide like. A propeptide spans 87 to 111 (NAQTDLDDPLRNIKLSSESALTYLT) (C-alpha peptide like). The residue at position 114 (glutamine 114) is a Pyrrolidone carboxylic acid.

This sequence belongs to the insulin family. Heterodimer of a B chain and an A chain linked by two disulfide bonds. Expressed in the cerebral light-green cells which are giant neuroendocrines cells involved in the control of growth.

The protein resides in the cytoplasmic vesicle. Its subcellular location is the secretory vesicle. This Lymnaea stagnalis (Great pond snail) protein is Molluscan insulin-related peptide 5.